A 105-amino-acid chain; its full sequence is Transmembrane protein 273 (105 aa).

An N-terminal signal peptide occupies residues 1–19 (MNLGVSMLRILFLLDVGGA). The Extracellular portion of the chain corresponds to 20–38 (QVLATGKTPGAEIDFKYAL). Residues 39–59 (IGTAVGVAISAGFLALKICMI) traverse the membrane as a helical segment. Topologically, residues 60-105 (RRHLFDDDSSDLKSTPGGLSDTIPLKKRAPRRNHNFSKRDAQVIEL) are cytoplasmic.

It is found in the membrane. This is Transmembrane protein 273 from Homo sapiens (Human).